The following is a 534-amino-acid chain: Autophagic-related protein 16.2 (534 aa).

WD repeat units follow at residues Thr-243 to Ser-281, Gly-288 to Ser-329, Gly-330 to Ser-368, Val-371 to Ser-411, Glu-413 to Leu-452, Lys-459 to Val-498, and Ser-504 to Arg-534.

The protein belongs to the WD repeat tipD family. Homodimer (via N-terminus). Most likely a component of a complex at least containing atg-5, lgg-3, atg-16.1 and/or atg-16.2. Interacts (via N-terminus) with atg-16.1 (via N-terminus). Interacts (via N-terminus) with atg-5. Interacts (via WD 5-6 repeats) with lgg-2; the interaction is direct. Expressed in neurons, pharyngeal muscles, body wall muscle cells and intestinal cells.

Its subcellular location is the cytoplasm. It localises to the cell membrane. Its function is as follows. Most likely a component of the atg-5-atg-12-atg-16.1/atg-16.2 complex, which is recruited to the preautophagosomal membrane and associates with lgg-2 to promote autophagosome formation. Plays a role in the recruitment of lipidated lgg-1 probably to the autophagosome membrane to promote autophagosome formation. Furthermore, association with atg-5 is required for the nucleation of lgg-1 positive autophagosomes. Although its role in autophagosome formation may be distinct to the role of atg-16.2, it functions in a partially redundant manner with atg-16.1 to regulate autophagic processes. In a daf-18/PTEN- and daf-16/FOXO-dependent manner, required for maintaining the numbers of germ stem cell progenitors in the gonad during the late phases of larval development. The polypeptide is Autophagic-related protein 16.2 (Caenorhabditis elegans).